A 664-amino-acid chain; its full sequence is Protein-arginine deiminase type-3 (664 aa).

It belongs to the protein arginine deiminase family. The cofactor is Ca(2+). As to expression, hair follicles, and epidermis at very low levels.

The protein resides in the cytoplasm. The catalysed reaction is L-arginyl-[protein] + H2O = L-citrullyl-[protein] + NH4(+). Its function is as follows. Catalyzes the deimination of arginine residues of proteins. The sequence is that of Protein-arginine deiminase type-3 (PADI3) from Homo sapiens (Human).